The following is a 448-amino-acid chain: Glucose-6-phosphate isomerase (448 aa).

Residue E290 is the Proton donor of the active site. Residues H311 and K425 contribute to the active site.

This sequence belongs to the GPI family.

Its subcellular location is the cytoplasm. The catalysed reaction is alpha-D-glucose 6-phosphate = beta-D-fructose 6-phosphate. It functions in the pathway carbohydrate biosynthesis; gluconeogenesis. Its pathway is carbohydrate degradation; glycolysis; D-glyceraldehyde 3-phosphate and glycerone phosphate from D-glucose: step 2/4. Functionally, catalyzes the reversible isomerization of glucose-6-phosphate to fructose-6-phosphate. The protein is Glucose-6-phosphate isomerase of Acetivibrio thermocellus (strain ATCC 27405 / DSM 1237 / JCM 9322 / NBRC 103400 / NCIMB 10682 / NRRL B-4536 / VPI 7372) (Clostridium thermocellum).